The chain runs to 536 residues: ATP synthase subunit alpha, mitochondrial (536 aa).

Residues 1–24 (MFKNALRRAGVAAPRISRVAQRGY) constitute a mitochondrion transit peptide. Residue 195–202 (GDRQTGKT) participates in ATP binding.

F-type ATP synthases have 2 components, the catalytic core F(1) and the membrane-embedded component F(0), linked together by a central stalk and a peripheral stalk. The central stalk, also called rotor shaft, is often seen as part of F(1). The peripheral stalk is seen as part of F(0). F(0) contains the membrane channel next to the rotor. F-type ATP synthases form dimers but each monomer functions independently in ATP generation. The dimer consists of 17 different polypeptides: ATP1 (subunit alpha, 3 molecules per monomer, part of F(1)), ATP2 (subunit beta, 3 copies per monomer, part of F(1)), ATP3 (subunit gamma, part of the central stalk), ATP4 (subunit b, part of the peripheral stalk), ATP5/OSCP (subunit 5/OSCP, part of the peripheral stalk), ATP6 (subunit a, part of the peripheral stalk), ATP7 (subunit d, part of the peripheral stalk), ATP8 (subunit 8, part of the peripheral stalk), OLI1 (subunit c, part of the rotor, 10 molecules per monomer), ATP14 (subunit h, part of the peripheral stalk), ATP15 (subunit epsilon, part of the central stalk), ATP16 (subunit delta, part of the central stalk), ATP17 (subunit f, part of the peripheral stalk), ATP18 (subunit i/j, part of the peripheral stalk), ATP19 (subunit k, dimer-specific, at interface between monomers), ATP20 (subunit g, at interface between monomers), TIM11 (subunit e, at interface between monomers).

It localises to the mitochondrion inner membrane. In terms of biological role, mitochondrial membrane ATP synthase (F(1)F(0) ATP synthase or Complex V) produces ATP from ADP in the presence of a proton gradient across the membrane which is generated by electron transport complexes of the respiratory chain. F-type ATP synthases consist of two structural domains, F(1) - containing the extramembraneous catalytic core, and F(0) - containing the membrane proton channel, linked together by a central stalk and a peripheral stalk. During catalysis, ATP synthesis in the catalytic domain of F(1) is coupled via a rotary mechanism of the central stalk subunits to proton translocation. Subunits alpha/ATP1 and beta/ATP2 form the catalytic core in F(1). Rotation of the central stalk against the surrounding alpha/ATP1(3)beta/ATP2(3) subunits leads to hydrolysis of ATP in three separate catalytic sites on the beta/ATP2 subunits. Subunit alpha/ATP1 does not bear the catalytic high-affinity ATP-binding sites. In Yarrowia lipolytica (strain CLIB 122 / E 150) (Yeast), this protein is ATP synthase subunit alpha, mitochondrial.